Consider the following 192-residue polypeptide: NADH dehydrogenase [ubiquinone] iron-sulfur protein 3 (192 aa).

It belongs to the complex I 30 kDa subunit family. Complex I is composed of about 45 different subunits. This is a component of the iron-sulfur (IP) fragment of the enzyme.

It localises to the mitochondrion inner membrane. The catalysed reaction is a ubiquinone + NADH + 5 H(+)(in) = a ubiquinol + NAD(+) + 4 H(+)(out). Functionally, core subunit of the mitochondrial membrane respiratory chain NADH dehydrogenase (Complex I) that is believed to belong to the minimal assembly required for catalysis. Complex I functions in the transfer of electrons from NADH to the respiratory chain. The immediate electron acceptor for the enzyme is believed to be ubiquinone. This Beta trigyna (Caucasian wild beet) protein is NADH dehydrogenase [ubiquinone] iron-sulfur protein 3 (NAD9).